An 86-amino-acid chain; its full sequence is Small ribosomal subunit protein bS20 (86 aa).

Positions 1–11 (MANHKSALKRA) are enriched in basic residues. The tract at residues 1 to 27 (MANHKSALKRARQNEERRIRNRARKTR) is disordered.

Belongs to the bacterial ribosomal protein bS20 family.

In terms of biological role, binds directly to 16S ribosomal RNA. This Syntrophobacter fumaroxidans (strain DSM 10017 / MPOB) protein is Small ribosomal subunit protein bS20.